The sequence spans 121 residues: Large ribosomal subunit protein bL12 (121 aa).

The protein belongs to the bacterial ribosomal protein bL12 family. As to quaternary structure, homodimer. Part of the ribosomal stalk of the 50S ribosomal subunit. Forms a multimeric L10(L12)X complex, where L10 forms an elongated spine to which 2 to 4 L12 dimers bind in a sequential fashion. Binds GTP-bound translation factors.

In terms of biological role, forms part of the ribosomal stalk which helps the ribosome interact with GTP-bound translation factors. Is thus essential for accurate translation. The protein is Large ribosomal subunit protein bL12 of Xanthomonas euvesicatoria pv. vesicatoria (strain 85-10) (Xanthomonas campestris pv. vesicatoria).